The primary structure comprises 254 residues: Ribosomal RNA large subunit methyltransferase E (254 aa).

Positions 1-28 are disordered; that stretch reads MTTPPRGPDGRPLKVRVKKSRGRTTSSQ. Residues 13–22 show a composition bias toward basic residues; it reads LKVRVKKSRG. Residues Gly80, Trp82, Asp103, Asp119, and Asp143 each coordinate S-adenosyl-L-methionine. Lys183 serves as the catalytic Proton acceptor. The disordered stretch occupies residues 231-254; that stretch reads DRAETDDAGTDGTGTAEAQAPRDQ.

This sequence belongs to the class I-like SAM-binding methyltransferase superfamily. RNA methyltransferase RlmE family.

The protein resides in the cytoplasm. It carries out the reaction uridine(2552) in 23S rRNA + S-adenosyl-L-methionine = 2'-O-methyluridine(2552) in 23S rRNA + S-adenosyl-L-homocysteine + H(+). In terms of biological role, specifically methylates the uridine in position 2552 of 23S rRNA at the 2'-O position of the ribose in the fully assembled 50S ribosomal subunit. This is Ribosomal RNA large subunit methyltransferase E from Xanthobacter autotrophicus (strain ATCC BAA-1158 / Py2).